We begin with the raw amino-acid sequence, 210 residues long: Large ribosomal subunit protein bL25 (210 aa).

Low complexity predominate over residues 191–200; that stretch reads EAPAEGAAAP. Residues 191–210 form a disordered region; that stretch reads EAPAEGAAAPAPAPAKKGKK.

This sequence belongs to the bacterial ribosomal protein bL25 family. CTC subfamily. In terms of assembly, part of the 50S ribosomal subunit; part of the 5S rRNA/L5/L18/L25 subcomplex. Contacts the 5S rRNA. Binds to the 5S rRNA independently of L5 and L18.

Its function is as follows. This is one of the proteins that binds to the 5S RNA in the ribosome where it forms part of the central protuberance. The protein is Large ribosomal subunit protein bL25 of Paracidovorax citrulli (strain AAC00-1) (Acidovorax citrulli).